A 171-amino-acid polypeptide reads, in one-letter code: Small ribosomal subunit protein uS5 (171 aa).

The S5 DRBM domain occupies 16–79 (LVERLVTVDR…EAAKRNMITV (64 aa)).

It belongs to the universal ribosomal protein uS5 family. As to quaternary structure, part of the 30S ribosomal subunit. Contacts proteins S4 and S8.

Functionally, with S4 and S12 plays an important role in translational accuracy. Located at the back of the 30S subunit body where it stabilizes the conformation of the head with respect to the body. This chain is Small ribosomal subunit protein uS5, found in Psychrobacter arcticus (strain DSM 17307 / VKM B-2377 / 273-4).